The following is a 314-amino-acid chain: Taste receptor type 2 member 42 (314 aa).

Over Met1 to Lys7 the chain is Extracellular. A helical transmembrane segment spans residues Ile8–Gly28. The Cytoplasmic portion of the chain corresponds to Leu29–Cys50. The chain crosses the membrane as a helical span at residues Leu51–Leu71. Residues Ala72–Thr101 lie on the Extracellular side of the membrane. Residues Cys102–Leu122 form a helical membrane-spanning segment. At Arg123 to Asn127 the chain is on the cytoplasmic side. The chain crosses the membrane as a helical span at residues Gly128–Leu148. Residues Glu149 to Leu187 lie on the Extracellular side of the membrane. Asn163 carries N-linked (GlcNAc...) asparagine glycosylation. The helical transmembrane segment at Thr188–Val208 threads the bilayer. Over Arg209 to Ser238 the chain is Cytoplasmic. The helical transmembrane segment at Phe239–Met259 threads the bilayer. Topologically, residues Leu260–Cys265 are extracellular. A helical membrane pass occupies residues Ile266 to Leu286. Residues Gly287–Leu314 are Cytoplasmic-facing.

The protein belongs to the G-protein coupled receptor T2R family.

It localises to the membrane. In terms of biological role, receptor that may play a role in the perception of bitterness and is gustducin-linked. May play a role in sensing the chemical composition of the gastrointestinal content. The activity of this receptor may stimulate alpha gustducin, mediate PLC-beta-2 activation and lead to the gating of TRPM5. This is Taste receptor type 2 member 42 (TAS2R42) from Homo sapiens (Human).